A 342-amino-acid chain; its full sequence is Isopentenyl-diphosphate delta-isomerase (342 aa).

12–13 serves as a coordination point for substrate; sequence RK. FMN contacts are provided by residues 71 to 73, Ser-101, and Asn-129; that span reads AMT. 101–103 is a substrate binding site; it reads SQR. Position 163 (Gln-163) interacts with substrate. Glu-164 is a Mg(2+) binding site. FMN is bound by residues Lys-195, Thr-225, 272-274, and 293-294; these read GIR and AR.

Belongs to the IPP isomerase type 2 family. Homooctamer. Dimer of tetramers. The cofactor is FMN. It depends on NADPH as a cofactor. Mg(2+) serves as cofactor.

Its subcellular location is the cytoplasm. The catalysed reaction is isopentenyl diphosphate = dimethylallyl diphosphate. Functionally, involved in the biosynthesis of isoprenoids. Catalyzes the 1,3-allylic rearrangement of the homoallylic substrate isopentenyl (IPP) to its allylic isomer, dimethylallyl diphosphate (DMAPP). The sequence is that of Isopentenyl-diphosphate delta-isomerase from Mycolicibacterium gilvum (strain PYR-GCK) (Mycobacterium gilvum (strain PYR-GCK)).